Reading from the N-terminus, the 407-residue chain is Eukaryotic initiation factor 4A-II (407 aa).

Positions 1 to 23 (MSGGSADYSRDHGGPEGMEPDGV) are disordered. Residues 33–61 (DNFDDMNLKESLLRGIYAYGFEKPSAIQQ) carry the Q motif motif. The Helicase ATP-binding domain occupies 64–235 (IIPCIKGYDV…KKFMREPIRI (172 aa)). 77-84 (AQSGTGKT) serves as a coordination point for ATP. The DEAD box motif lies at 183–186 (DEAD). Positions 246-407 (GIKQFYINVE…EMPMNVADLI (162 aa)) constitute a Helicase C-terminal domain.

It belongs to the DEAD box helicase family. eIF4A subfamily. EIF4F is a multi-subunit complex, the composition of which varies with external and internal environmental conditions. It is composed of at least EIF4A, EIF4E and EIF4G1/EIFFG3. Interacts with EIF4E.

It catalyses the reaction ATP + H2O = ADP + phosphate + H(+). Its function is as follows. ATP-dependent RNA helicase which is a subunit of the eIF4F complex involved in cap recognition and is required for mRNA binding to ribosome. In the current model of translation initiation, eIF4A unwinds RNA secondary structures in the 5'-UTR of mRNAs which is necessary to allow efficient binding of the small ribosomal subunit, and subsequent scanning for the initiator codon. This Gallus gallus (Chicken) protein is Eukaryotic initiation factor 4A-II (EIF4A2).